The chain runs to 157 residues: Transmembrane protein 50A (157 aa).

The residue at position 2 (Ser2) is an N-acetylserine. Phosphoserine is present on Ser2. 4 helical membrane passes run 26–46, 58–78, 95–115, and 126–146; these read IAAG…AVMY, TCGV…NGQV, IWLF…MWIL, and VVYP…GGLV.

Belongs to the UPF0220 family.

It localises to the membrane. The sequence is that of Transmembrane protein 50A (Tmem50a) from Mus musculus (Mouse).